An 85-amino-acid chain; its full sequence is Keratin-associated protein 7-1 (85 aa).

Residues 37–82 form a 12 X 2 AA repeats of G-[YCGS] region; sequence GSPLGYGCNGYSSLGYGFGGSSFSNLGCGYGGSFYRPWGSGSGFGY.

This sequence belongs to the KRTAP type 7 family. As to quaternary structure, interacts with wool keratins. As to expression, wool.

In the wool cortex, wool keratin intermediate filaments are embedded in an interfilamentous matrix, consisting of hair keratin-associated proteins (KRTAP), which are essential for the formation of a rigid and resistant wool shaft through their extensive disulfide bond cross-linking with abundant cysteine residues of wool keratins. The matrix proteins include the high-sulfur and high-glycine-tyrosine keratins. This Ovis aries (Sheep) protein is Keratin-associated protein 7-1 (KRTAP7-1).